The sequence spans 180 residues: Der GTPase-activating protein YihI (180 aa).

2 disordered regions span residues 1–88 (MTRK…KERR) and 147–180 (PEVT…FGKE). Basic and acidic residues-rich tracts occupy residues 18–33 (FREK…ARKS), 50–67 (EALD…DPRL), 77–88 (VEKKPTTKKERR), and 153–163 (APVRKGAKTDE). Acidic residues predominate over residues 164–173 (DLLDQFENMD).

The protein belongs to the YihI family. In terms of assembly, interacts with Der.

Its function is as follows. A GTPase-activating protein (GAP) that modifies Der/EngA GTPase function. May play a role in ribosome biogenesis. The chain is Der GTPase-activating protein YihI from Photobacterium profundum (strain SS9).